A 493-amino-acid chain; its full sequence is Protein kinase PINOID 2 (493 aa).

The disordered stretch occupies residues 1–53; that stretch reads MAAIKEESDYDSSRSSLTAPDSRRSWISDIGSSSSVSARSFGGDTPASSCRYK. The segment covering 27-44 has biased composition (low complexity); sequence ISDIGSSSSVSARSFGGD. One can recognise a Protein kinase domain in the interval 80 to 443; sequence FRLVRRLGSG…SAEVKRHPFF (364 aa). ATP-binding positions include 86–94 and K120; that span reads LGSGDLGNV. Residue D216 is the Proton acceptor of the active site. Gly residues predominate over residues 295-306; it reads GGGAAAGNNGDG. Disordered stretches follow at residues 295–320 and 458–493; these read GGGA…TAEP and EVPA…FDYF. Residues 307-319 are compositionally biased toward acidic residues; the sequence is DGNDEEAETETAE. Residues 444 to 493 enclose the AGC-kinase C-terminal domain; that stretch reads KGVNWALVRSVRPPEVPAPPAPAPKKVMTMSKKERQEPYNYRPENHFDYF. The segment covering 474–493 has biased composition (basic and acidic residues); it reads SKKERQEPYNYRPENHFDYF.

Belongs to the protein kinase superfamily. Ser/Thr protein kinase family.

The catalysed reaction is L-seryl-[protein] + ATP = O-phospho-L-seryl-[protein] + ADP + H(+). It catalyses the reaction L-threonyl-[protein] + ATP = O-phospho-L-threonyl-[protein] + ADP + H(+). Its function is as follows. Serine/threonine-protein kinase involved in the regulation of auxin signaling. In Oryza sativa subsp. japonica (Rice), this protein is Protein kinase PINOID 2 (PID2).